A 265-amino-acid chain; its full sequence is Arginine and glutamate-rich protein 1 (265 aa).

Residues 1 to 54 (MGRSRSRSSSRSKHAKSGKHNKKRSRSREKERVRKRSKSRESKRNRRRESRSRS) show a composition bias toward basic residues. The tract at residues 1–66 (MGRSRSRSSS…NTASRRERER (66 aa)) is necessary and sufficient for RNA binding. Residues 1–106 (MGRSRSRSSS…EKKAEYERQR (106 aa)) are disordered. Basic and acidic residues-rich tracts occupy residues 60-76 (SRRERERAASPPDRIDI) and 85-106 (SSLDEKQKREDEEKKAEYERQR). The segment at 67-265 (AASPPDRIDI…KLSFSLKSPD (199 aa)) is necessary and sufficient for transcriptional regulation. Residues 164-168 (LLEEL) carry the LXXLL motif 1; degenerate motif. The short motif at 193-197 (LERIL) is the LXXLL motif 2; degenerate element. A compositionally biased stretch (basic and acidic residues) spans 229–245 (RMKLEQERQRQQKEEQK). The disordered stretch occupies residues 229–265 (RMKLEQERQRQQKEEQKIILGKGKSRPKLSFSLKSPD).

The protein belongs to the ARGLU1 family.

The protein resides in the nucleus. It is found in the nucleus speckle. Its subcellular location is the chromosome. Functionally, dual function regulator of gene expression; regulator of transcription and modulator of alternative splicing. General coactivator of nuclear receptor-induced gene expression. This Xenopus tropicalis (Western clawed frog) protein is Arginine and glutamate-rich protein 1 (arglu1).